A 316-amino-acid chain; its full sequence is Olfactory receptor 2K2 (316 aa).

The Extracellular segment spans residues 1 to 20; that stretch reads MQGENFTIWSIFFLEGFSQY. N-linked (GlcNAc...) asparagine glycosylation occurs at Asn-5. Residues 21-41 form a helical membrane-spanning segment; sequence PGLEVVLFVFSLVMYLTTLLG. Over 42–65 the chain is Cytoplasmic; that stretch reads NSTLILITILDSRLKTPMYLFLGN. A helical transmembrane segment spans residues 66–86; the sequence is LSFMDICYTSASVPTLLVNLL. Over 87-97 the chain is Extracellular; the sequence is SSQKTIIFSGC. Cys-97 and Cys-188 are disulfide-bonded. A helical transmembrane segment spans residues 98–118; it reads AVQMYLSLAMGSTECVLLAVM. Over 119–143 the chain is Cytoplasmic; sequence AYDRYVAICNPLRYSIIMNRCVCAR. The chain crosses the membrane as a helical span at residues 144–164; it reads MATVSWVTGCLTALLETSFAL. Over 165–199 the chain is Extracellular; the sequence is QIPLCGNLIDHFTCEILAVLKLACTSSLLMNTIML. A helical transmembrane segment spans residues 200–220; that stretch reads VVSILLLPIPMLLVCISYIFI. At 221 to 238 the chain is on the cytoplasmic side; sequence LSTILRITSAEGRNKAFS. Residues 239-259 traverse the membrane as a helical segment; that stretch reads TCGAHLTVVILYYGAALSMYL. Residues 260–270 are Extracellular-facing; sequence KPSSSNAQKID. The helical transmembrane segment at 271-291 threads the bilayer; sequence KIISLLYGVLTPMLNPIIYSL. At 292 to 316 the chain is on the cytoplasmic side; the sequence is RNKEVKDAMKKLLGKITLHQTHEHL.

It belongs to the G-protein coupled receptor 1 family.

It localises to the cell membrane. In terms of biological role, odorant receptor. The polypeptide is Olfactory receptor 2K2 (OR2K2) (Homo sapiens (Human)).